The following is a 298-amino-acid chain: Bifunctional protein FolD (298 aa).

NADP(+) contacts are provided by residues 166–168, serine 191, and isoleucine 232; that span reads GRS.

Belongs to the tetrahydrofolate dehydrogenase/cyclohydrolase family. As to quaternary structure, homodimer.

The catalysed reaction is (6R)-5,10-methylene-5,6,7,8-tetrahydrofolate + NADP(+) = (6R)-5,10-methenyltetrahydrofolate + NADPH. The enzyme catalyses (6R)-5,10-methenyltetrahydrofolate + H2O = (6R)-10-formyltetrahydrofolate + H(+). The protein operates within one-carbon metabolism; tetrahydrofolate interconversion. Functionally, catalyzes the oxidation of 5,10-methylenetetrahydrofolate to 5,10-methenyltetrahydrofolate and then the hydrolysis of 5,10-methenyltetrahydrofolate to 10-formyltetrahydrofolate. This chain is Bifunctional protein FolD, found in Maricaulis maris (strain MCS10) (Caulobacter maris).